Consider the following 179-residue polypeptide: Photosystem I assembly protein Ycf3 (179 aa).

3 TPR repeats span residues 29-62 (AFSYYRAGMSAQSEGKYAEALENYYEALQLEEDP), 66-99 (SYTLYNIGLIYGNNGNYSQALEYYHQALELNSNL), and 126-159 (NLEIRNDEYLELAKEFFDKAAEYWRQALKLAPDN).

The protein belongs to the Ycf3 family.

Its subcellular location is the plastid. The protein localises to the chloroplast thylakoid membrane. Its function is as follows. Essential for the assembly of the photosystem I (PSI) complex. May act as a chaperone-like factor to guide the assembly of the PSI subunits. This chain is Photosystem I assembly protein Ycf3, found in Trieres chinensis (Marine centric diatom).